The chain runs to 559 residues: MAASMQFYGVKTPELALNSKRIEFSSKGLNFSALVSSARVFSRNVDRSCKNIALRVTCEAGRVELLERKASETFKLNKTEKKLTCVMKFGGSSVASAERMIQVAKLILSFPDEKPVVVLSAMAKTTNKLLMAGEKAVCCGVTNVDTIEELSYIKELHIRTAHELGVETAVIAEHLEGLEQLLKGVAMMKELTLRSRDYLVSFGECMSTRLFAAYLNKIGHKARQYDAFEIGIITTDDFTNADILEATYPAVSKKLLGDWSKENALPVVTGFLGKGWRSCAVTTLGRGGSDLTATTIGKALGLREIQVWKDVDGVLTCDPNIYCGAQPVPHLTFDEAAELAYFGAQVLHPLSMRPAREGNIPVRVKNSYNPTAPGTVITRSRDMSKAVLTSIVLKRNVTMLDITSTRMLGQYGFLAKVFSTFEKLGISVDVVATSEVSISLTLDPSKFCSRELIQHELDQVVEELEKIAVVNLLRHRSIISLIGNVQRSSFILEKGFRVLRTNGINVQMISQGASKVNISLIVNDDEAEHCVKALHSAFFETDTCEAVSECPTGYIAASS.

The transit peptide at 1–85 directs the protein to the chloroplast; that stretch reads MAASMQFYGV…LNKTEKKLTC (85 aa). The ATP site is built by Lys-88, Gly-91, and Ser-120. Glu-204 serves as a coordination point for substrate. ACT domains follow at residues 402 to 480 and 481 to 559; these read ITST…SIIS and LIGN…AASS.

The protein belongs to the aspartokinase family. As to expression, highly expressed in xylem of leaves and hypocotyls, stele of roots and in trichomes after bolting. Weak expression in veins and mesophyll cells of caulone leaves, inflorescence stems, sepals, petals and stigmata.

The protein localises to the plastid. It localises to the chloroplast. It carries out the reaction L-aspartate + ATP = 4-phospho-L-aspartate + ADP. It participates in amino-acid biosynthesis; L-lysine biosynthesis via DAP pathway; (S)-tetrahydrodipicolinate from L-aspartate: step 1/4. The protein operates within amino-acid biosynthesis; L-methionine biosynthesis via de novo pathway; L-homoserine from L-aspartate: step 1/3. Its pathway is amino-acid biosynthesis; L-threonine biosynthesis; L-threonine from L-aspartate: step 1/5. Its activity is regulated as follows. Allosterically inhibited by lysine, but not by S-adenosyl-L-methionine (SAM). K(0.5) for lysine in the presence of physiological concentrations of substrates is 7.4 uM. No inhibition by threonine or leucine and no activation or inhibition by alanine, cysteine, isoleucine, serine, valine, methionine, glutamine, asparagine, glutamic acid or arginine. In terms of biological role, involved in the first step of essential amino acids lysine, threonine, methionine and isoleucine synthesis via the aspartate-family pathway. This chain is Aspartokinase 3, chloroplastic (AK3), found in Arabidopsis thaliana (Mouse-ear cress).